Here is a 115-residue protein sequence, read N- to C-terminus: uncharacterized protein (115 aa).

3 consecutive transmembrane segments (helical) span residues 10 to 30, 47 to 67, and 77 to 97; these read IAIL…SFWL, ASGI…ATVA, and VHFF…AIIV.

Its subcellular location is the cell membrane. This is an uncharacterized protein from Mycoplasma genitalium (strain ATCC 33530 / DSM 19775 / NCTC 10195 / G37) (Mycoplasmoides genitalium).